The following is a 300-amino-acid chain: 33 kDa chaperonin (300 aa).

Cystine bridges form between Cys235–Cys237 and Cys269–Cys272.

It belongs to the HSP33 family. Under oxidizing conditions two disulfide bonds are formed involving the reactive cysteines. Under reducing conditions zinc is bound to the reactive cysteines and the protein is inactive.

The protein localises to the cytoplasm. Functionally, redox regulated molecular chaperone. Protects both thermally unfolding and oxidatively damaged proteins from irreversible aggregation. Plays an important role in the bacterial defense system toward oxidative stress. The sequence is that of 33 kDa chaperonin from Pseudomonas savastanoi pv. phaseolicola (strain 1448A / Race 6) (Pseudomonas syringae pv. phaseolicola (strain 1448A / Race 6)).